We begin with the raw amino-acid sequence, 152 residues long: Large ribosomal subunit protein uL13 (152 aa).

This sequence belongs to the universal ribosomal protein uL13 family. In terms of assembly, part of the 50S ribosomal subunit.

Its function is as follows. This protein is one of the early assembly proteins of the 50S ribosomal subunit, although it is not seen to bind rRNA by itself. It is important during the early stages of 50S assembly. This chain is Large ribosomal subunit protein uL13, found in Wolbachia sp. subsp. Drosophila simulans (strain wRi).